Consider the following 325-residue polypeptide: 1-aminocyclopropane-1-carboxylate oxidase 2 (325 aa).

In terms of domain architecture, Fe2OG dioxygenase spans 157-257 (PTFGTKVSNY…RMSIASFYNP (101 aa)). Fe cation is bound by residues H181, D183, and H238.

The protein belongs to the iron/ascorbate-dependent oxidoreductase family. It depends on Fe cation as a cofactor.

It carries out the reaction 1-aminocyclopropane-1-carboxylate + L-ascorbate + O2 = ethene + L-dehydroascorbate + hydrogen cyanide + CO2 + 2 H2O. The protein operates within alkene biosynthesis; ethylene biosynthesis via S-adenosyl-L-methionine; ethylene from S-adenosyl-L-methionine: step 2/2. The chain is 1-aminocyclopropane-1-carboxylate oxidase 2 (ACO2) from Doritaenopsis sp. (Moth orchid).